The primary structure comprises 282 residues: Large ribosomal subunit protein uL2 (282 aa).

Disordered regions lie at residues 31 to 56 and 226 to 282; these read EKSL…RHRG and SVMN…GSKM. The segment covering 35–44 has biased composition (polar residues); the sequence is LDSQSHSAGR. Residues 257–266 are compositionally biased toward basic residues; sequence TVGKKTRSKK.

Belongs to the universal ribosomal protein uL2 family. As to quaternary structure, part of the 50S ribosomal subunit. Forms a bridge to the 30S subunit in the 70S ribosome.

Functionally, one of the primary rRNA binding proteins. Required for association of the 30S and 50S subunits to form the 70S ribosome, for tRNA binding and peptide bond formation. It has been suggested to have peptidyltransferase activity; this is somewhat controversial. Makes several contacts with the 16S rRNA in the 70S ribosome. The protein is Large ribosomal subunit protein uL2 of Levilactobacillus brevis (strain ATCC 367 / BCRC 12310 / CIP 105137 / JCM 1170 / LMG 11437 / NCIMB 947 / NCTC 947) (Lactobacillus brevis).